Here is a 151-residue protein sequence, read N- to C-terminus: Late embryogenesis abundant protein Lea14-A (151 aa).

This sequence belongs to the LEA type 2 family.

The polypeptide is Late embryogenesis abundant protein Lea14-A (LEA14-A) (Gossypium hirsutum (Upland cotton)).